We begin with the raw amino-acid sequence, 392 residues long: Protein FAM53C (392 aa).

An N-acetylmethionine modification is found at M1. A disordered region spans residues 78–119 (LRPPSRGNSPKEQPFSQVLRPEPPDPEKLPVPPAPPSKRHCR). Polar residues predominate over residues 83–93 (RGNSPKEQPFS). Phosphoserine is present on residues S122, S162, S232, S234, S255, and S273. Disordered stretches follow at residues 141–167 (LWTPIKHRGSGGGGGPQVPHQSPPKRV) and 204–294 (RPCA…EDPR). Over residues 241-256 (ASRFLPSARSSPASSP) the composition is skewed to low complexity. The segment covering 278-294 (LDARKTGVKRRHEEDPR) has biased composition (basic and acidic residues). S299 carries the post-translational modification Phosphoserine. Residues 341–364 (ASCSPTGGSSQVLSESEEEEEGAV) are disordered.

Belongs to the FAM53 family.

The polypeptide is Protein FAM53C (Homo sapiens (Human)).